The chain runs to 91 residues: Aspartyl/glutamyl-tRNA(Asn/Gln) amidotransferase subunit C (91 aa).

The interval 68–91 is disordered; the sequence is LDQDDALANAPETEDGRFKGPNVS.

This sequence belongs to the GatC family. In terms of assembly, heterotrimer of A, B and C subunits.

The catalysed reaction is L-glutamyl-tRNA(Gln) + L-glutamine + ATP + H2O = L-glutaminyl-tRNA(Gln) + L-glutamate + ADP + phosphate + H(+). It catalyses the reaction L-aspartyl-tRNA(Asn) + L-glutamine + ATP + H2O = L-asparaginyl-tRNA(Asn) + L-glutamate + ADP + phosphate + 2 H(+). Allows the formation of correctly charged Asn-tRNA(Asn) or Gln-tRNA(Gln) through the transamidation of misacylated Asp-tRNA(Asn) or Glu-tRNA(Gln) in organisms which lack either or both of asparaginyl-tRNA or glutaminyl-tRNA synthetases. The reaction takes place in the presence of glutamine and ATP through an activated phospho-Asp-tRNA(Asn) or phospho-Glu-tRNA(Gln). The protein is Aspartyl/glutamyl-tRNA(Asn/Gln) amidotransferase subunit C of Halobacterium salinarum (strain ATCC 29341 / DSM 671 / R1).